A 151-amino-acid polypeptide reads, in one-letter code: Deoxyuridine 5'-triphosphate nucleotidohydrolase (151 aa).

Substrate contacts are provided by residues 70–72 (RSG), N83, 87–89 (LID), and M97.

This sequence belongs to the dUTPase family. It depends on Mg(2+) as a cofactor.

It carries out the reaction dUTP + H2O = dUMP + diphosphate + H(+). It participates in pyrimidine metabolism; dUMP biosynthesis; dUMP from dCTP (dUTP route): step 2/2. Functionally, this enzyme is involved in nucleotide metabolism: it produces dUMP, the immediate precursor of thymidine nucleotides and it decreases the intracellular concentration of dUTP so that uracil cannot be incorporated into DNA. The sequence is that of Deoxyuridine 5'-triphosphate nucleotidohydrolase from Pseudomonas fluorescens (strain Pf0-1).